The sequence spans 234 residues: Endo-1,4-beta-xylanase 1 (234 aa).

A signal peptide spans 1–21 (MVSFIFTRIILFAAAINGAVA). Asparagine 25 and asparagine 75 each carry an N-linked (GlcNAc...) asparagine glycan. A GH11 domain is found at 38 to 234 (SGTPSSTGYS…SSGFSSITVA (197 aa)). The Nucleophile role is filled by glutamate 124. N-linked (GlcNAc...) asparagine glycosylation occurs at asparagine 167. The Proton donor role is filled by glutamate 221.

The protein belongs to the glycosyl hydrolase 11 (cellulase G) family.

The protein localises to the secreted. It catalyses the reaction Endohydrolysis of (1-&gt;4)-beta-D-xylosidic linkages in xylans.. Its pathway is glycan degradation; xylan degradation. In terms of biological role, endo-1,4-beta-xylanase involved in the hydrolysis of xylan, a major structural heterogeneous polysaccharide found in plant biomass representing the second most abundant polysaccharide in the biosphere, after cellulose. This is Endo-1,4-beta-xylanase 1 (Xyn1) from Leucoagaricus gongylophorus (Leaf-cutting ant fungus).